The primary structure comprises 99 residues: uncharacterized protein (99 aa).

This is an uncharacterized protein from Dictyostelium discoideum (Social amoeba).